The following is a 555-amino-acid chain: AP2-like ethylene-responsive transcription factor ANT (555 aa).

2 disordered regions span residues 34-56 (GGRE…SVPP) and 199-231 (LSMS…NHQQ). 3 stretches are compositionally biased toward low complexity: residues 41-53 (SSST…SSSS), 199-208 (LSMSPGSQSS), and 218-231 (QNQN…NHQQ). DNA-binding regions (AP2/ERF) lie at residues 283 to 349 (QYRG…TNFS) and 385 to 443 (IYRG…TNFD).

Belongs to the AP2/ERF transcription factor family. AP2 subfamily. Interacts with ANL2, HDG2 and HDG10, and possibly with GL2, HDG3, HDG8, ATML1 and PDF2. Mostly expressed in developing flowers. Also present in mature flowers, siliques and seedlings, but not in mature roots, leaves and stems. Expressed in ovules and in vegetative and floral primordia.

Its subcellular location is the nucleus. Functionally, transcription activator that recognizes and binds to the DNA consensus sequence 5'-CAC[AG]N[AT]TNCCNANG-3'. Required for the initiation and growth of ovules integumenta, and for the development of female gametophyte. Plays a critical role in the development of gynoecium marginal tissues (e.g. stigma, style and septa), and in the fusion of carpels and of medial ridges leading to ovule primordia. Also involved in organs initiation and development, including floral organs. Maintains the meristematic competence of cells and consequently sustains expression of cell cycle regulators during organogenesis, thus controlling the final size of each organ by controlling their cell number. Regulates INO autoinduction and expression pattern. As ANT promotes petal cell identity and mediates down-regulation of AG in flower whorl 2, it functions as a class A homeotic gene. The chain is AP2-like ethylene-responsive transcription factor ANT from Arabidopsis thaliana (Mouse-ear cress).